Reading from the N-terminus, the 297-residue chain is MHRLLAWDAACLPPPPAAFRPMEVANFYYEPDCLAYGAKAARAAPRAPAAEPAIGEHERAIDFSPYLEPLAPAAADFAAPAPAHHDFLSDLFADDYGAKPSKKPSDYGYVSLGRAGAKAAPPACFPPPPPAALKAEPGFEPADCKRADDAPAMAAGFPFALRAYLGYQATPSGSSGSLSTSSSSSPPGTPSPADAKAAPAACFAGPPAAPAKAKAKKAVDKLSDEYKMRRERNNIAVRKSRDKAKMRNLETQHKVLELTAENERLQKKVEQLSRELSTLRNLFKQLPEPLLASAGHC.

Positions 1-22 are required for Lys-134 sumoylation; that stretch reads MHRLLAWDAACLPPPPAAFRPM. Arg3 bears the Asymmetric dimethylarginine; by CARM1 mark. The interval 22-105 is required for MYC transcriptional repression; that stretch reads MEVANFYYEP…YGAKPSKKPS (84 aa). Lys39 is modified (N6-acetyllysine; alternate). An N6-methylated lysine; alternate modification is found at Lys39. An N6-acetyllysine; by KAT2A and KAT2B mark is found at Lys99 and Lys102. The residue at position 103 (Lys103) is an N6-acetyllysine; by KAT2A and KAT2B; alternate. Residue Lys103 forms a Glycyl lysine isopeptide (Lys-Gly) (interchain with G-Cter in SUMO2); alternate linkage. Ser105 carries the post-translational modification Phosphoserine; by RPS6KA1 and PKC/PRKCA. Lys134 is covalently cross-linked (Glycyl lysine isopeptide (Lys-Gly) (interchain with G-Cter in SUMO2); alternate). A Glycyl lysine isopeptide (Lys-Gly) (interchain with G-Cter in SUMO); alternate cross-link involves residue Lys134. A Glycyl lysine isopeptide (Lys-Gly) (interchain with G-Cter in SUMO2) cross-link involves residue Lys145. The segment at 172–201 is disordered; that stretch reads SGSSGSLSTSSSSSPPGTPSPADAKAAPAA. Thr180 is subject to Phosphothreonine; by GSK3-beta. Ser181 and Ser182 each carry an O-linked (GlcNAc) serine glycan. Phosphoserine; by GSK3-beta is present on Ser185. Residue Thr189 is modified to Phosphothreonine; by RPS6KA1, CDK2 and MAPK. Residues Lys212 and Lys214 each participate in a glycyl lysine isopeptide (Lys-Gly) (interchain with G-Cter in SUMO2) cross-link. The region spanning 223 to 286 is the bZIP domain; it reads SDEYKMRRER…STLRNLFKQL (64 aa). Residues 227-247 are basic motif; it reads KMRRERNNIAVRKSRDKAKMR. A Phosphoserine; by PKC/PRKCA modification is found at Ser240. The leucine-zipper stretch occupies residues 249-256; that stretch reads LETQHKVL. Phosphoserine; by CaMK2 is present on Ser277. Lys284 participates in a covalent cross-link: Glycyl lysine isopeptide (Lys-Gly) (interchain with G-Cter in SUMO2).

Belongs to the bZIP family. C/EBP subfamily. In terms of assembly, binds DNA as a homodimer and as a heterodimer. Interacts with MYB; within the complex, MYB and CEBPB bind to different promoter regions. Interacts with ATF4. Binds DNA as a heterodimer with ATF4. Can form stable heterodimers with CEBPA, CEBPD, CEBPE and CEBPG. Interacts with SIX1. Isoform 2 and isoform 3 also form heterodimers. Interacts with TRIM28 and PTGES2. Interacts with PRDM16. Interacts with CCDC85B. Forms a complex with THOC5. Interacts with ZNF638; this interaction increases transcriptional activation. Interacts with CIDEA and CIDEC; these interactions increase transcriptional activation of a subset of CEBPB downstream target genes. Interacts with DDIT3/CHOP. Interacts with EP300; recruits EP300 to chromatin. Interacts with RORA; the interaction disrupts interaction with EP300. Interacts (not methylated) with MED23, MED26, SMARCA2, SMARCB1 and SMARCC1. Interacts with KAT2A and KAT2B. Interacts with ATF5; EP300 is required for ATF5 and CEBPB interaction and DNA binding. Interacts with NFE2L1; the heterodimer represses expression of DSPP during odontoblast differentiation. Post-translationally, phosphorylated at Thr-189 by MAPK and CDK2, serves to prime phosphorylation at Thr-180 and Ser-185 by GSK3B and acquire DNA-binding as well as transactivation activities, required to induce adipogenesis. MAPK and CDK2 act sequentially to maintain Thr-189 in the primed phosphorylated state during mitotical cloning expansion and thereby progression of terminal differentiation. Phosphorylation at Ser-105 enhances transactivation activity. Phosphorylation at Ser-277 in response to calcium increases transactivation activity. Phosphorylated at Thr-189 by RPS6KA1. Methylated. Methylation at Arg-3 by CARM1 and at Lys-39 by EHMT2 inhibit transactivation activity. Methylation is probably inhibited by phosphorylation at Thr-189. In terms of processing, sumoylated by polymeric chains of SUMO2 or SUMO3. Sumoylation at Lys-134 is required for inhibition of T-cells proliferation. In adipocytes, sumoylation at Lys-134 by PIAS1 leads to ubiquitination and subsequent proteasomal degradation. Desumoylated by SENP2, which abolishes ubiquitination and stabilizes protein levels. Post-translationally, ubiquitinated, leading to proteasomal degradation. O-glycosylated, glycosylation at Ser-181 and Ser-182 prevents phosphorylation on Thr-189, Ser-185 and Thr-180 and DNA binding activity which delays the adipocyte differentiation program. In terms of processing, acetylated. Acetylation at Lys-39 is an important and dynamic regulatory event that contributes to its ability to transactivate target genes, including those associated with adipogenesis and adipocyte function. Deacetylation by HDAC1 represses its transactivation activity. Acetylated by KAT2A and KAT2B within a cluster of lysine residues between amino acids 99-103, this acetylation is strongly induced by glucocorticoid treatment and enhances transactivation activity. In terms of tissue distribution, liver and lung.

The protein resides in the nucleus. It localises to the cytoplasm. Its function is as follows. Important transcription factor regulating the expression of genes involved in immune and inflammatory responses. Also plays a significant role in adipogenesis, as well as in the gluconeogenic pathway, liver regeneration, and hematopoiesis. The consensus recognition site is 5'-T[TG]NNGNAA[TG]-3'. Its functional capacity is governed by protein interactions and post-translational protein modifications. During early embryogenesis, plays essential and redundant roles with CEBPA. Has a promitotic effect on many cell types such as hepatocytes and adipocytes but has an antiproliferative effect on T-cells by repressing MYC expression, facilitating differentiation along the T-helper 2 lineage. Binds to regulatory regions of several acute-phase and cytokines genes and plays a role in the regulation of acute-phase reaction and inflammation. Also plays a role in intracellular bacteria killing. During adipogenesis, is rapidly expressed and, after activation by phosphorylation, induces CEBPA and PPARG, which turn on the series of adipocyte genes that give rise to the adipocyte phenotype. The delayed transactivation of the CEBPA and PPARG genes by CEBPB appears necessary to allow mitotic clonal expansion and thereby progression of terminal differentiation. Essential for female reproduction because of a critical role in ovarian follicle development. Restricts osteoclastogenesis: together with NFE2L1; represses expression of DSPP during odontoblast differentiation. Functionally, essential for gene expression induction in activated macrophages. Plays a major role in immune responses such as CD4(+) T-cell response, granuloma formation and endotoxin shock. Not essential for intracellular bacteria killing. In terms of biological role, acts as a dominant negative through heterodimerization with isoform 2. Promotes osteoblast differentiation and osteoclastogenesis. The protein is CCAAT/enhancer-binding protein beta of Rattus norvegicus (Rat).